The sequence spans 109 residues: Irditoxin subunit A (109 aa).

An N-terminal signal peptide occupies residues 1–19 (MKTLLLAVAVVAFVCLGSA). Residues 20–34 (DQLGLGRQQIDWGQG) constitute a propeptide that is removed on maturation. Pyrrolidone carboxylic acid is present on Gln-35. 5 disulfide bridges follow: Cys-44–Cys-66, Cys-47–Cys-55, Cys-61–Cys-85, Cys-89–Cys-100, and Cys-101–Cys-106.

This sequence belongs to the three-finger toxin family. Ancestral subfamily. Boigatoxin sub-subfamily. In terms of assembly, heterodimer of A and B chains; disulfide-linked. As to expression, expressed by the venom gland.

The protein localises to the secreted. In terms of biological role, this bird and reptile-specific postsynaptic neurotoxin inhibits the chick muscle alpha-1-beta-1-gamma-delta (CHRNA1-CHRNB1-CHRNG-CHNRD) nicotinic acetylcholine receptor (nAChR) 100-fold more compared with the mouse receptor. In vivo, produces rapid flaccid paralysis, dyspnea and increased respiratory rate in geckos. At sublethal doses geckos were immobilized for up to three days and then recovered. Chicks injected with lethal doses showed rapid onset of inactivity, dyspnea and neck droop, and no extended paralysis with survival was seen. This chain is Irditoxin subunit A, found in Boiga irregularis (Brown tree snake).